Here is a 327-residue protein sequence, read N- to C-terminus: Aliphatic sulfonates import ATP-binding protein SsuB (327 aa).

A disordered region spans residues 21-54 (ELAQPRIADGDAQDAAVYERDGGAHAPPDGDRAD). Residues 37–54 (VYERDGGAHAPPDGDRAD) are compositionally biased toward basic and acidic residues. An ABC transporter domain is found at 66-285 (VRLTRVSKRY…ARASAAFAAL (220 aa)). Position 98–105 (98–105 (GRSGCGKS)) interacts with ATP. Residues 300–327 (APAAPNAAGPEGASRGRAAPASGLRWAV) are disordered.

It belongs to the ABC transporter superfamily. Aliphatic sulfonates importer (TC 3.A.1.17.2) family. As to quaternary structure, the complex is composed of two ATP-binding proteins (SsuB), two transmembrane proteins (SsuC) and a solute-binding protein (SsuA).

It is found in the cell inner membrane. It carries out the reaction ATP + H2O + aliphatic sulfonate-[sulfonate-binding protein]Side 1 = ADP + phosphate + aliphatic sulfonateSide 2 + [sulfonate-binding protein]Side 1.. In terms of biological role, part of the ABC transporter complex SsuABC involved in aliphatic sulfonates import. Responsible for energy coupling to the transport system. The protein is Aliphatic sulfonates import ATP-binding protein SsuB of Burkholderia pseudomallei (strain K96243).